Consider the following 816-residue polypeptide: Mechanosensitive cation channel TMEM63B (816 aa).

The Extracellular segment spans residues 1-46 (MLPYVIATLGSAGSTCKASTCSNSTKDYCYSARIRSTVLQGLPFGG). Residues 47-71 (VPTVLALDFMCFLALLFVFSILRKV) form a helical membrane-spanning segment. 2 S-palmitoyl cysteine lipidation sites follow: C57 and C119. Over 72–138 (AWDYGRLALV…KDDEIRDKCG (67 aa)) the chain is Cytoplasmic. A helical membrane pass occupies residues 139 to 171 (GDAVHYLSFQRHIIGLLVAVGVLSVGIVLPVNF). The Extracellular segment spans residues 172 to 195 (SGDLLENNAYSFGRTTIANLNSGN). The helical transmembrane segment at 196 to 220 (NLLWLHTSFAFLYLLLTVYSMRRHT) threads the bilayer. Over 221-420 (SKMRYKEDDL…IYWEHLSIRG (200 aa)) the chain is Cytoplasmic. The interval 224–419 (RYKEDDLVKR…NIYWEHLSIR (196 aa)) is intracellular linker IL2; confers mechanosensitivity. 2 S-palmitoyl cysteine lipidation sites follow: C375 and C391. The chain crosses the membrane as a helical span at residues 421–450 (FIWWIRCLVINVVLFILLFFLTTPAIIITT). Residues 451–465 (MDKFNVTKPVEYLNN) are Extracellular-facing. The helical transmembrane segment at 466–495 (PIITQFFPTLLLWCFSALLPTIVYYSAFFE) threads the bilayer. Over 496–499 (AHWT) the chain is Cytoplasmic. A helical membrane pass occupies residues 500–536 (RSGENRTTMHKCYTFLIFMVLLLPSLGLSSLDVFFRW). The Extracellular segment spans residues 537–559 (LFDKKFLAEAAVRFECVFLPDNG). A helical transmembrane segment spans residues 560–592 (AFFVNYVIASAFIGNAMDLLRIPGLLMYMIRLC). A gating helix region spans residues 560–592 (AFFVNYVIASAFIGNAMDLLRIPGLLMYMIRLC). The Cytoplasmic portion of the chain corresponds to 593–612 (LARSAAERRNVKRHQAYEFQ). Residues 613–631 (FGAAYAWMMCVFTVVMTYS) traverse the membrane as a helical segment. Over 632–634 (ITC) the chain is Extracellular. A helical membrane pass occupies residues 635 to 659 (PIIVPFGLMYMLLKHLVDRYNLYYA). Over 660-666 (YLPAKLD) the chain is Cytoplasmic. Residues 667 to 695 (KKIHSGAVNQVVAAPILCLFWLLFFSTMR) form a helical membrane-spanning segment. The Extracellular segment spans residues 696 to 700 (TGFLA). The chain crosses the membrane as a helical span at residues 701–721 (PTSMFTFVVLVITIVICLCHV). S-palmitoyl cysteine attachment occurs at residues C719 and C722. Residues 722–816 (CFGHFKYLSA…DSLIENEIRQ (95 aa)) are Cytoplasmic-facing.

It belongs to the CSC1 (TC 1.A.17) family. In terms of assembly, monomer. Post-translationally, palmitoylation is required for localization to the plasma membrane and stability.

The protein resides in the cell membrane. The protein localises to the lysosome membrane. Its subcellular location is the early endosome membrane. The enzyme catalyses Ca(2+)(in) = Ca(2+)(out). It carries out the reaction Mg(2+)(in) = Mg(2+)(out). It catalyses the reaction K(+)(in) = K(+)(out). The catalysed reaction is Na(+)(in) = Na(+)(out). The enzyme catalyses Cs(+)(in) = Cs(+)(out). Mechanosensitive cation channel with low conductance and high activation threshold. Osmosensitive cation channel preferentially activated by hypotonic stress. Also acts as a phospholipid scramblase in response to changes in membrane structure: upon changes in membrane curvature and thickness, alters its conformation and translocates phospholipids, thereby controlling plasma membrane lipid distribution. The sequence is that of Mechanosensitive cation channel TMEM63B from Gallus gallus (Chicken).